A 124-amino-acid polypeptide reads, in one-letter code: UPF0212 protein Hlac_0869 (124 aa).

Belongs to the UPF0212 family.

The protein is UPF0212 protein Hlac_0869 of Halorubrum lacusprofundi (strain ATCC 49239 / DSM 5036 / JCM 8891 / ACAM 34).